We begin with the raw amino-acid sequence, 3075 residues long: Lovastatin nonaketide synthase mokA (3075 aa).

The Ketosynthase family 3 (KS3) domain maps to 49–488 (NEPIVVVGSG…GTNAHAIIEE (440 aa)). Catalysis depends on for beta-ketoacyl synthase activity residues C222, H361, and H408. The interval 603 to 945 (VFTGQGAQWP…AYLWEQFGIP (343 aa)) is acyl and malonyl transferase. S697 acts as the For malonyltransferase activity in catalysis. Positions 997–1133 (HLLLGKLSEY…GQLVVTLDEG (137 aa)) are N-terminal hotdog fold. Residues 997-1311 (HLLLGKLSEY…FKPFSPPTAS (315 aa)) enclose the PKS/mFAS DH domain. The Proton acceptor; for dehydratase activity role is filled by H1029. Residues 1029 to 1041 (HALQGQVVFPAAG) are dehydratase-like. Positions 1156 to 1311 (MNRVNINSFY…FKPFSPPTAS (156 aa)) are C-terminal hotdog fold. D1218 acts as the Proton donor; for dehydratase activity in catalysis. The tract at residues 1556-1594 (YDLIIASNVLHATPDLEKTMAHARSLLKPGGQMVILEIT) is methyltransferase. A beta-ketoacyl reductase region spans residues 2176–2470 (ALPARIRPID…FKIPERRGKA (295 aa)). One can recognise a Carrier domain in the interval 2492–2571 (DQVRQIVIDG…DLADDAAARL (80 aa)). Residue S2531 is modified to O-(pantetheine 4'-phosphoryl)serine. The segment at 2582-2624 (SEGGAETSDNDTSGPEGTDLSASTTITEPSSADEEDEKQEDDN) is disordered. Positions 2591–2611 (NDTSGPEGTDLSASTTITEPS) are enriched in polar residues. Residues 2612-2624 (SADEEDEKQEDDN) are compositionally biased toward acidic residues. The peptide synthetase elongation stretch occupies residues 2633–2989 (PLSLGQEYAW…AETAEPAPLF (357 aa)).

It depends on pantetheine 4'-phosphate as a cofactor.

The catalysed reaction is holo-[lovastatin nonaketide synthase] + 9 malonyl-CoA + S-adenosyl-L-methionine + 11 NADPH + 19 H(+) = dihydromonacolin L-[lovastatin nonaketide synthase] + S-adenosyl-L-homocysteine + 9 CO2 + 11 NADP(+) + 9 CoA + 6 H2O. The protein operates within polyketide biosynthesis; lovastatin biosynthesis. Functionally, nonaketide synthase; part of the gene cluster that mediates the biosynthesis of monakolin K, also known as lovastatin, and which acts as a potent competitive inhibitor of HMG-CoA reductase. Monakolin K biosynthesis is performed in two stages. The first stage is catalyzed by the nonaketide synthase mokA, which belongs to type I polyketide synthases and catalyzes the iterative nine-step formation of the polyketide. This PKS stage is completed by the action of dehydrogenase mokE, which catalyzes the NADPH-dependent reduction of the unsaturated tetra-, penta- and heptaketide intermediates that arise during the mokA-mediated biosynthesis of the nonaketide chain and leads to dihydromonacolin L. Covalently bound dihydromonacolin L is released from mokA by the mokD esterase. Conversion of dihydromonacolin L into monacolin L and then monacolin J is subsequently performed with the participation of molecular oxygen and P450 monoogygenase mokC. Finally, mokF performs the conversion of monacoline J to monacoline K through the addition of the side-chain diketide moiety (2R)-2-methylbutanoate produced by the diketide synthase mokB. The sequence is that of Lovastatin nonaketide synthase mokA from Monascus pilosus (Red mold).